The following is a 269-amino-acid chain: tRNA pseudouridine synthase A (269 aa).

Catalysis depends on Asp-51, which acts as the Nucleophile. Residue Tyr-109 participates in substrate binding.

This sequence belongs to the tRNA pseudouridine synthase TruA family. As to quaternary structure, homodimer.

It catalyses the reaction uridine(38/39/40) in tRNA = pseudouridine(38/39/40) in tRNA. In terms of biological role, formation of pseudouridine at positions 38, 39 and 40 in the anticodon stem and loop of transfer RNAs. This chain is tRNA pseudouridine synthase A, found in Aeromonas hydrophila subsp. hydrophila (strain ATCC 7966 / DSM 30187 / BCRC 13018 / CCUG 14551 / JCM 1027 / KCTC 2358 / NCIMB 9240 / NCTC 8049).